The primary structure comprises 297 residues: 4-diphosphocytidyl-2-C-methyl-D-erythritol kinase (297 aa).

Residue lysine 10 is part of the active site. 94–104 (PVAAGLAGGSS) is an ATP binding site. Aspartate 136 is an active-site residue.

It belongs to the GHMP kinase family. IspE subfamily.

The catalysed reaction is 4-CDP-2-C-methyl-D-erythritol + ATP = 4-CDP-2-C-methyl-D-erythritol 2-phosphate + ADP + H(+). It functions in the pathway isoprenoid biosynthesis; isopentenyl diphosphate biosynthesis via DXP pathway; isopentenyl diphosphate from 1-deoxy-D-xylulose 5-phosphate: step 3/6. In terms of biological role, catalyzes the phosphorylation of the position 2 hydroxy group of 4-diphosphocytidyl-2C-methyl-D-erythritol. The chain is 4-diphosphocytidyl-2-C-methyl-D-erythritol kinase from Shouchella clausii (strain KSM-K16) (Alkalihalobacillus clausii).